A 564-amino-acid polypeptide reads, in one-letter code: Kelch-like protein 12 (564 aa).

Residues 29–96 (CDITLRVEGT…VYTETVLVTV (68 aa)) enclose the BTB domain. The 102-residue stretch at 131 to 232 (CLGIRDFAET…LTPRYITDVI (102 aa)) folds into the BACK domain. 6 Kelch repeats span residues 278-325 (VLLV…ALND), 327-375 (VYVI…TLGD), 376-422 (MIYV…VASG), 423-469 (LIYC…LLND), 471-516 (IYVV…VLRG), and 518-563 (LYAI…VLRE).

Component of the BCR(KLHL12) E3 ubiquitin ligase complex.

The protein localises to the cytoplasmic vesicle. It is found in the COPII-coated vesicle. It participates in protein modification; protein ubiquitination. Substrate-specific adapter of a BCR (BTB-CUL3-RBX1) E3 ubiquitin ligase complex that acts as a negative regulator of Wnt signaling pathway and ER-Golgi transport. The BCR(KLHL12) complex is involved in ER-Golgi transport by regulating the size of COPII coats, thereby playing a key role in collagen export, which is required for embryonic stem (ES) cells division. Negatively regulates the Wnt signaling pathway, possibly via the targeted ubiquitination and subsequent proteolysis of dvl2 and dvl3. Regulates convergent-extension movements during early embryonic development. The sequence is that of Kelch-like protein 12 (klhl12) from Danio rerio (Zebrafish).